The chain runs to 205 residues: GTP cyclohydrolase-2 (205 aa).

A GTP-binding site is contributed by 49-53; sequence RLHSE. C54, C65, and C67 together coordinate Zn(2+). GTP contacts are provided by residues Q70, 92-94, and T114; that span reads EGR. D126 acts as the Proton acceptor in catalysis. The active-site Nucleophile is the R128. 2 residues coordinate GTP: T149 and K154.

This sequence belongs to the GTP cyclohydrolase II family. Requires Zn(2+) as cofactor.

The catalysed reaction is GTP + 4 H2O = 2,5-diamino-6-hydroxy-4-(5-phosphoribosylamino)-pyrimidine + formate + 2 phosphate + 3 H(+). Its pathway is cofactor biosynthesis; riboflavin biosynthesis; 5-amino-6-(D-ribitylamino)uracil from GTP: step 1/4. Catalyzes the conversion of GTP to 2,5-diamino-6-ribosylamino-4(3H)-pyrimidinone 5'-phosphate (DARP), formate and pyrophosphate. The protein is GTP cyclohydrolase-2 of Pseudomonas putida (strain GB-1).